The following is a 20-amino-acid chain: Disintegrin (20 aa).

Positions 1–20 (EAGEECDCGTPENPCCDAAT) constitute a Disintegrin domain. Cystine bridges form between cysteine 6-cysteine 15 and cysteine 8-cysteine 16.

This sequence belongs to the venom metalloproteinase (M12B) family. P-II subfamily. P-IIa sub-subfamily. As to quaternary structure, monomer. Expressed by the venom gland.

Its subcellular location is the secreted. In terms of biological role, inhibits fibrinogen interaction with platelets. Acts by binding to alpha-IIb/beta-3 (ITGA2B/ITGB3) on the platelet surface and inhibits aggregation induced by ADP, thrombin, platelet-activating factor and collagen. The chain is Disintegrin from Bothrops fonsecai (Fonseca's lancehead).